Consider the following 163-residue polypeptide: T-cell surface glycoprotein CD3 zeta chain (163 aa).

The signal sequence occupies residues 1 to 21 (MKWKALFTAAILQAQLPITEA). The Extracellular segment spans residues 22–30 (QSFGLLDPK). A helical membrane pass occupies residues 31–51 (LCYLLDGILFIYGVILTALFL). Residues 52-163 (RVKFSRSADA…ALHMQALPPR (112 aa)) lie on the Cytoplasmic side of the membrane. Serine 58 is modified (phosphoserine). 3 ITAM domains span residues 61 to 89 (APAY…LDKR), 99 to 127 (KPRR…EIGM), and 130 to 158 (ERRR…LHMQ). Phosphotyrosine is present on residues tyrosine 64, tyrosine 72, tyrosine 83, tyrosine 110, tyrosine 122, tyrosine 141, and tyrosine 152. Positions 83-98 (YDVLDKRRGRDPEMGG) are enriched in basic and acidic residues. Residues 83 to 111 (YDVLDKRRGRDPEMGGKPRRKNPQEGLYN) are disordered.

Belongs to the CD3Z/FCER1G family. As to quaternary structure, the TCR-CD3 complex is composed of a CD3D/CD3E and a CD3G/CD3E heterodimers that preferentially associate with TCRalpha and TCRbeta, respectively, to form TCRalpha/CD3E/CD3G and TCRbeta/CD3G/CD3E trimers. In turn, the hexamer interacts with CD3Z homodimer to form the TCR-CD3 complex. Alternatively, TCRalpha and TCRbeta can be replaced by TCRgamma and TCRdelta. Interacts with SLA. Interacts with TRAT1. Interacts with DOCK2. Interacts with SLA2. Interacts with SHB. Interacts with ZAP70. Interacts (tyrosine phosphorylated) with SHC1 (via SH2 domain). Interacts with PTPRC. Interacts with CRK; this interaction regulates CD3Z phosphorylation. Interacts (on T cell side) with CD81, ICAM1 and CD9 at immunological synapses between antigen-presenting cells and T cells. Interacts with CD160. Interacts with LY6E. Interacts with LY6E. The signaling subunit of immunoglobulin gamma (IgG) Fc receptor complex. As a homodimer or a heterodimer with FCER1G, associates with the ligand binding subunit FCGR3A (via transmembrane domain); this interaction is a prerequisite for Fc receptor complex expression on the cell surface. Interacts with CD5. Post-translationally, phosphorylated on Tyr residues after T-cell receptor triggering by LCK in association with CD4/CD8.

The protein localises to the cell membrane. Part of the TCR-CD3 complex present on T-lymphocyte cell surface that plays an essential role in adaptive immune response. When antigen presenting cells (APCs) activate T-cell receptor (TCR), TCR-mediated signals are transmitted across the cell membrane by the CD3 chains CD3D, CD3E, CD3G and CD3Z. All CD3 chains contain immunoreceptor tyrosine-based activation motifs (ITAMs) in their cytoplasmic domain. Upon TCR engagement, these motifs become phosphorylated by Src family protein tyrosine kinases LCK and FYN, resulting in the activation of downstream signaling pathways. CD3Z ITAMs phosphorylation creates multiple docking sites for the protein kinase ZAP70 leading to ZAP70 phosphorylation and its conversion into a catalytically active enzyme. Plays an important role in intrathymic T-cell differentiation. Additionally, participates in the activity-dependent synapse formation of retinal ganglion cells (RGCs) in both the retina and dorsal lateral geniculate nucleus (dLGN). In Sus scrofa (Pig), this protein is T-cell surface glycoprotein CD3 zeta chain (CD247).